Here is a 228-residue protein sequence, read N- to C-terminus: Urease accessory protein UreF (228 aa).

It belongs to the UreF family. In terms of assembly, ureD, UreF and UreG form a complex that acts as a GTP-hydrolysis-dependent molecular chaperone, activating the urease apoprotein by helping to assemble the nickel containing metallocenter of UreC. The UreE protein probably delivers the nickel.

It is found in the cytoplasm. In terms of biological role, required for maturation of urease via the functional incorporation of the urease nickel metallocenter. This is Urease accessory protein UreF from Lachnoclostridium phytofermentans (strain ATCC 700394 / DSM 18823 / ISDg) (Clostridium phytofermentans).